Consider the following 2443-residue polypeptide: NFX1-type zinc finger-containing protein 1 homolog (2443 aa).

Disordered stretches follow at residues 212–339 (PHKQ…EGDH), 545–566 (SSDS…NVYG), and 583–672 (HRDN…FVSP). Low complexity predominate over residues 246-263 (ISISNSSPPGLSSVSPIP). Over residues 275 to 294 (PQPPGLSIPAPPGISLPTPP) the composition is skewed to pro residues. Positions 297 to 310 (SLQNHQNDQFEQAH) are enriched in polar residues. Positions 311–322 (STISRMSENSSS) are enriched in low complexity. Residues 545-564 (SSDSGRQVLSESRGAGSSNV) show a composition bias toward polar residues. 2 stretches are compositionally biased toward basic and acidic residues: residues 601-638 (GEVH…RRDQ) and 662-672 (EHSRDDKFVSP). In terms of domain architecture, UvrD-like helicase ATP-binding spans 1040–1545 (MDESQRLAFC…MNLTISDKIV (506 aa)). ATP is bound at residue 1061-1068 (GPPGTGKT). NF-X1-type zinc fingers lie at residues 1769–1791 (CGHV…RCLY), 1853–1873 (CGHA…ECSQ), 1912–1930 (CPHK…ECME), and 2027–2044 (CGHT…PCKA).

This sequence belongs to the ZNFX1 family. As to quaternary structure, interacts with ego-1, csr-1, wago-1 and prg-1. Interacts with wago-4; the interaction promotes the transmission of epigenetic information across generations. As to expression, expressed in germs cells. Not expressed in somatic tissues.

It localises to the cytoplasm. It is found in the perinuclear region. The protein resides in the cytoplasmic granule. It carries out the reaction ATP + H2O = ADP + phosphate + H(+). Its function is as follows. Epigenetic inheritance factor which, in association with the Argonaute protein wago-4, mediates small RNA-directed transgenerational epigenetic inheritance and thus balances the transgenerational inheritance of epigenetic information. Specifically, maintains a balanced production of small RNAs by preventing the spread of epigenetic signals towards the 5'-end of target mRNAs. Plays a role in small RNA-induced gene silencing in the germline. In Caenorhabditis elegans, this protein is NFX1-type zinc finger-containing protein 1 homolog.